The chain runs to 413 residues: Probable N-acetyltransferase HLS1-like (413 aa).

The region spanning 5–187 is the N-acetyltransferase domain; it reads VEVREYDPSK…VNPVYAHRVN (183 aa).

This sequence belongs to the acetyltransferase family.

This is Probable N-acetyltransferase HLS1-like from Arabidopsis thaliana (Mouse-ear cress).